The following is a 103-amino-acid chain: Small ribosomal subunit protein uS10 (103 aa).

This sequence belongs to the universal ribosomal protein uS10 family. As to quaternary structure, part of the 30S ribosomal subunit.

In terms of biological role, involved in the binding of tRNA to the ribosomes. In Psychrobacter sp. (strain PRwf-1), this protein is Small ribosomal subunit protein uS10.